We begin with the raw amino-acid sequence, 453 residues long: Ras association domain-containing protein 10 (453 aa).

Residues 1–107 form the Ras-associating domain; sequence MENEEWKVSV…VKFVLVRSEA (107 aa). Residues 262–295 are a coiled coil; the sequence is QKCDEVLLLQEQISRQEEAMEQMTVQIQEELNKR. Residues 299 to 310 are compositionally biased toward basic and acidic residues; it reads RRQEELSSKEQE. 2 disordered regions span residues 299–322 and 402–453; these read RRQE…DQGG and GVTT…ESLV. Polar residues-rich tracts occupy residues 402 to 411 and 433 to 444; these read GVTTTGSPTD and TGLSSMHSQDSD.

Its subcellular location is the cytoplasm. The protein resides in the cytosol. It is found in the cytoskeleton. It localises to the microtubule organizing center. The protein localises to the centrosome. Its subcellular location is the spindle pole. In terms of biological role, may play role in regulating embryonic neurogenesis. This chain is Ras association domain-containing protein 10 (rassf10), found in Xenopus laevis (African clawed frog).